A 306-amino-acid chain; its full sequence is Peroxisome biogenesis factor 2 (306 aa).

Topologically, residues 1–15 (MAASENNMEEINPVL) are peroxisomal matrix. The chain crosses the membrane as a helical span at residues 16-42 (RISQLDAIELNKALEQLIWSQFSSCFQ). Residues 43–48 (GFKPGL) are Cytoplasmic-facing. Residues 49–74 (LTRFEPEIKASLCLFLWRYTIYTKNA) traverse the membrane as a helical segment. Residues 75–98 (TVGQTILNMQYKNDLAVTKKYRPL) lie on the Peroxisomal matrix side of the membrane. A helical membrane pass occupies residues 99-125 (NKQQKVWFALFLVGGKWLEERSFDLFS). Residues 126 to 134 (NHPFGASFQ) lie on the Cytoplasmic side of the membrane. A helical membrane pass occupies residues 135-161 (RTKYFLNAISGLLKFGALLNFLIFLQQ). Residues 162-188 (GKFATLTERLLGIRSVFSRPQDVRQVG) are Peroxisomal matrix-facing. The chain crosses the membrane as a helical span at residues 189–212 (FEYMNREILWHGFAEFLIFLLPLI). Over 213–306 (NTQKLKSKLF…KIEISEVHTL (94 aa)) the chain is Cytoplasmic. Residues C245, C248, C260, H262, C265, C268, C281, and C284 each coordinate Zn(2+). An RING-type zinc finger spans residues 245–285 (CCLCGEWPAMPHTIGCSHVFCYYCIKSNYMSDMYFTCPKCS).

It belongs to the pex2/pex10/pex12 family. In terms of assembly, component of the PEX2-PEX10-PEX12 retrotranslocation channel.

It localises to the peroxisome membrane. It catalyses the reaction [E2 ubiquitin-conjugating enzyme]-S-ubiquitinyl-L-cysteine + [acceptor protein]-L-cysteine = [E2 ubiquitin-conjugating enzyme]-L-cysteine + [acceptor protein]-S-ubiquitinyl-L-cysteine.. It carries out the reaction S-ubiquitinyl-[E2 ubiquitin-conjugating enzyme]-L-cysteine + [acceptor protein]-L-lysine = [E2 ubiquitin-conjugating enzyme]-L-cysteine + N(6)-ubiquitinyl-[acceptor protein]-L-lysine.. The protein operates within protein modification; protein ubiquitination. Its function is as follows. E3 ubiquitin-protein ligase component of a retrotranslocation channel required for peroxisome organization by mediating export of the PEX5 receptor from peroxisomes to the cytosol, thereby promoting PEX5 recycling. The retrotranslocation channel is composed of PEX2, PEX10 and PEX12; each subunit contributing transmembrane segments that coassemble into an open channel that specifically allows the passage of PEX5 through the peroxisomal membrane. PEX2 also regulates peroxisome organization by acting as a E3 ubiquitin-protein ligase. In Xenopus laevis (African clawed frog), this protein is Peroxisome biogenesis factor 2.